The sequence spans 762 residues: Subtilisin-like protease SBT3.11 (762 aa).

Residues 1 to 16 (MMSSIVSWWFFWVISA) form the signal peptide. The propeptide at 17–116 (VCILKVEFNI…VTPNTFYELQ (100 aa)) is activation peptide. An Inhibitor I9 domain is found at 37–115 (VHIVYLGEKE…QVTPNTFYEL (79 aa)). In terms of domain architecture, Peptidase S8 spans 120-609 (TFDYLGLSHS…GGLVNPNKAA (490 aa)). Aspartate 150 (charge relay system) is an active-site residue. Asparagine 206 carries an N-linked (GlcNAc...) asparagine glycan. The active-site Charge relay system is the histidine 226. Asparagine 241 and asparagine 371 each carry an N-linked (GlcNAc...) asparagine glycan. Serine 540 serves as the catalytic Charge relay system.

It belongs to the peptidase S8 family.

It localises to the secreted. The chain is Subtilisin-like protease SBT3.11 from Arabidopsis thaliana (Mouse-ear cress).